The primary structure comprises 1220 residues: MIDVNKFESMQIGLASPDKIRSWSYGEVKKPETINYRTLKPERDGLFDERIFGPTKDWECACGKYKRIRYKGIVCDRCGVEVTRSKVRRERMGHIELAAPVTHIWYFKGIPSRMGLVLDMSPRSLEEIIYFASYVVIDPGDTPMEKKQLLTEREYREKREEYGQTFNAKMGAEAIKELLQDVELDKEVAELKEDLKSAQGQKRTRAIRRLDILDAFKESGNDPAWMVMDTIPVIPPDLRPMVQLEGGRFATSDLNDLYRRVINRNNRLKRLLDLNAPSIIVQNEKRMLQEAVDALIDNGRRGRPVTGPGNRPLKSLSHMLKGKQGRFRQNLLGKRVDYSGRSVIDVGPWLKFYQCGVPREMALELFKPFVMRELVKRDMASNIKNARRKIDRQDDDVWDVLEDVIKERPVLLNRAPTLHRLGIQAFEPVLVDGKSIRLHPLVCEAYNADFDGDQMAIHVPLSDEAMAEARMLMLAAHHILAPKDGKPIVTPSQDVVLGNYYLTMEQKGREGEGMIFKDTNEVLMALQNGYVHLHSRIGIATNSFTDKPFTDDQKQKIMVTSVGKAIFNEIMPKDFPYLNEPTQDNIVNGVPDKYFIDKGEDINDYLEDAPLIDPFKKGFLSDIIAQVFKVYKVQRTSDLLDDMKTLGYTQSTNSGLTVGIADITNLKEKPEIVEAAHKKVATVSKQFRRGLITDEERHDRVIQTWNDAKDDIQQKLVDSFDPNNPISMMSDSGARGNISNFTQLAGMRGLMAAPNGGMMEVPVISNFREGLSVMEMFMSTHGARKGMTDTALKTADSGYLTRRLVDVAQDVIVREEDCGTDRGLVVSAIREGNEMIEPLYDRLVGRFTMKDVLDPKSGEVLVKRNTLMDEDTAQMIVDAGVESVTIRSVFTCNTKHGVCQKCYGRNMATGEQVEVGEAVGTVAAQSIGEPGTQLTMRNFHTGGVAGGEDITQGLPRVQEIFEARNPKGEAVITEVTGEITAIDENPAEHTREITVKGETDTRTYSVPYASSVAVAEGDHINRGERLTGGSIDPKQLIKVRDVMATENYLLSEVQKVYRMQGVDIGDKHVEVMVRQMLRKIRVMDPGDTNILPGTLLDIADFKEKNTQAIISGGIPATGRPVLLGITKASLETNSFLSAASFQETTRVLTDASIRGKNDPLIGLKENVIIGKIIPAGTGMATYRHEEPKSVGTVSDSVYSISDIEKQMKAKDGQQGDTDKK.

Zn(2+)-binding residues include Cys60, Cys62, Cys75, and Cys78. Mg(2+) is bound by residues Asp449, Asp451, and Asp453. Cys818, Cys892, Cys899, and Cys902 together coordinate Zn(2+).

Belongs to the RNA polymerase beta' chain family. As to quaternary structure, the RNAP catalytic core consists of 2 alpha, 1 beta, 1 beta' and 1 omega subunit. When a sigma factor is associated with the core the holoenzyme is formed, which can initiate transcription. Requires Mg(2+) as cofactor. Zn(2+) serves as cofactor.

It catalyses the reaction RNA(n) + a ribonucleoside 5'-triphosphate = RNA(n+1) + diphosphate. Its function is as follows. DNA-dependent RNA polymerase catalyzes the transcription of DNA into RNA using the four ribonucleoside triphosphates as substrates. This chain is DNA-directed RNA polymerase subunit beta', found in Lacticaseibacillus casei (strain BL23) (Lactobacillus casei).